The primary structure comprises 317 residues: tRNA dimethylallyltransferase (317 aa).

Residue 14-21 participates in ATP binding; sequence GPTAVGKT. 16–21 contacts substrate; it reads TAVGKT. The tract at residues 39–42 is interaction with substrate tRNA; that stretch reads DSMQ.

It belongs to the IPP transferase family. In terms of assembly, monomer. It depends on Mg(2+) as a cofactor.

It catalyses the reaction adenosine(37) in tRNA + dimethylallyl diphosphate = N(6)-dimethylallyladenosine(37) in tRNA + diphosphate. Catalyzes the transfer of a dimethylallyl group onto the adenine at position 37 in tRNAs that read codons beginning with uridine, leading to the formation of N6-(dimethylallyl)adenosine (i(6)A). This chain is tRNA dimethylallyltransferase, found in Bacillus cereus (strain ATCC 10987 / NRS 248).